The chain runs to 1112 residues: cGMP-inhibited 3',5'-cyclic phosphodiesterase 3B (1112 aa).

Residues 1–10 are compositionally biased toward basic and acidic residues; the sequence is MRRDERDAKA. An interaction with RAPGEF3 region spans residues 1 to 25; the sequence is MRRDERDAKAMRSLQPPDGAGSPPE. The segment at 1 to 26 is disordered; it reads MRRDERDAKAMRSLQPPDGAGSPPES. S13 is modified (phosphoserine). The next 6 membrane-spanning stretches (helical) occupy residues 88-108, 117-137, 152-172, 192-212, 220-240, and 247-267; these read FVLA…AAWL, HSLS…CFLT, WWLL…WQWW, AAAG…TLAH, VLVL…LGSL, and LLSG…DHFF. S295 is modified (phosphoserine; by PKB/AKT1 or PKB/AKT2). A phosphoserine mark is found at S296 and S442. The interval 418-471 is disordered; the sequence is EKGDRKLNKGLNRNSLPTPQLRRSSGTSGLLPVEQSSRWDRNNGKRPHQEFGIS. The span at 428-445 shows a compositional bias: polar residues; that stretch reads LNRNSLPTPQLRRSSGTS. Positions 436 to 460 are interaction with PIK3R6; that stretch reads PQLRRSSGTSGLLPVEQSSRWDRNN. A compositionally biased stretch (basic and acidic residues) spans 454-466; sequence SRWDRNNGKRPHQ. Positions 651–1079 constitute a PDEase domain; sequence TNIEQEVSLD…KIWKEIVEEE (429 aa). H737 functions as the Proton donor in the catalytic mechanism. H737 is an AMP binding site. Mg(2+) is bound by residues H741, H821, D822, and D937. 3 residues coordinate AMP: D822, D937, and Q988. 2 stretches are compositionally biased toward acidic residues: residues 1017–1041 and 1103–1112; these read EEDN…EEME and QVIEEADEEE. Disordered stretches follow at residues 1017–1051 and 1092–1112; these read EEDN…PPRR and ENSS…DEEE.

It belongs to the cyclic nucleotide phosphodiesterase family. PDE3 subfamily. In terms of assembly, homodimer. Interacts with PIK3CG; regulates PDE3B activity and thereby cAMP levels in cells. Interacts with RAPGEF3 and PIK3R6; form a signaling complex that regulates phosphatidylinositol 3-kinase gamma in angiogenesis. Interacts with ABHD15; this interaction regulates PDE3B's stability and expression and, thereby, impacts the antilipolytic action of insulin. Mg(2+) serves as cofactor. Requires Mn(2+) as cofactor. Phosphorylation at Ser-295 mediates insulin-induced activation of PDE3B. Abundant in adipose tissues.

It is found in the membrane. It catalyses the reaction a nucleoside 3',5'-cyclic phosphate + H2O = a nucleoside 5'-phosphate + H(+). It carries out the reaction 3',5'-cyclic AMP + H2O = AMP + H(+). The enzyme catalyses 3',5'-cyclic GMP + H2O = GMP + H(+). Its activity is regulated as follows. Inhibited by cGMP. Cyclic nucleotide phosphodiesterase with a dual-specificity for the second messengers cAMP and cGMP, which are key regulators of many important physiological process. Regulates angiogenesis by inhibiting the cAMP-dependent guanine nucleotide exchange factor RAPGEF3 and downstream phosphatidylinositol 3-kinase gamma-mediated signaling. Controls cardiac contractility by reducing cAMP concentration in cardiocytes. The chain is cGMP-inhibited 3',5'-cyclic phosphodiesterase 3B from Homo sapiens (Human).